We begin with the raw amino-acid sequence, 165 residues long: uncharacterized protein (165 aa).

Positions 68 to 107 (LEGAPEWAAPHPEEQRRSPPACSQHTPPLPSTPTGPPPCS) are disordered. Residues 94–107 (PPLPSTPTGPPPCS) show a composition bias toward pro residues.

This is an uncharacterized protein from Homo sapiens (Human).